The sequence spans 257 residues: Flap endonuclease Xni (257 aa).

D109 is a Mg(2+) binding site. In terms of domain architecture, 5'-3' exonuclease spans 165-254 (VKPEQLADYW…GFNLQDIRYE (90 aa)). K(+) contacts are provided by L176, P185, I187, and I190. Residues 189–194 (GIGPKA) are interaction with DNA.

This sequence belongs to the Xni family. Mg(2+) serves as cofactor. K(+) is required as a cofactor.

Has flap endonuclease activity. During DNA replication, flap endonucleases cleave the 5'-overhanging flap structure that is generated by displacement synthesis when DNA polymerase encounters the 5'-end of a downstream Okazaki fragment. The chain is Flap endonuclease Xni from Vibrio atlanticus (strain LGP32) (Vibrio splendidus (strain Mel32)).